We begin with the raw amino-acid sequence, 114 residues long: Pro-FMRFamide-related neuropeptide FF (114 aa).

The N-terminal stretch at 1–21 (MDSKWAALLLLLLLLLNWGHT) is a signal peptide. The propeptide occupies 22–69 (EEAGSWGEDQVFAGEDKGPHPPQYAHIPDRIQTPGSLFRVLLQAMDTP). A Phenylalanine amide modification is found at Phe-82. The propeptide occupies 85–100 (SAWGSWSKEQLNPQAR). Position 111 is a phenylalanine amide (Phe-111).

The protein belongs to the FARP (FMRFamide related peptide) family.

The protein resides in the secreted. In terms of biological role, morphine modulating peptides. Have wide-ranging physiologic effects, including the modulation of morphine-induced analgesia, elevation of arterial blood pressure, and increased somatostatin secretion from the pancreas. Neuropeptide FF potentiates and sensitizes ASIC1 and ASIC3 channels. The polypeptide is Pro-FMRFamide-related neuropeptide FF (Npff) (Mus musculus (Mouse)).